The chain runs to 85 residues: Small ribosomal subunit protein bS16 (85 aa).

The protein belongs to the bacterial ribosomal protein bS16 family.

This chain is Small ribosomal subunit protein bS16, found in Metamycoplasma arthritidis (strain 158L3-1) (Mycoplasma arthritidis).